The primary structure comprises 728 residues: Peroxisome biogenesis protein 5 (728 aa).

The segment at 1 to 58 is disordered; the sequence is MAMRDLVNGGAACAVPGSSSSSNPLGALTNALLGSSSKTQERLKEIPNANRSGPRPQF. An amphipathic helix 1 (AH1) region spans residues 11–97; sequence AACAVPGSSS…FRGFRSVDQN (87 aa). Cys13 is covalently cross-linked (Glycyl cysteine thioester (Cys-Gly) (interchain with G-Cter in ubiquitin)). 3 consecutive repeat copies span residues 240-244, 257-261, and 270-274. Short sequence motifs (wxxxF/Y motif) lie at residues 240–244, 257–261, and 270–274; these read WAAEF, WVQSF, and WATEF. The interval 288-311 is amphipathic helix 3 (AH3); sequence SMDMQNIAAMEQTRKLAHTLSQDG. 6 consecutive repeat copies span residues 348–352, 362–366, 378–382, 396–400, 408–412, and 425–429. 6 short sequence motifs (wxxxF/Y motif) span residues 348-352, 362-366, 378-382, 396-400, 408-412, and 425-429; these read WATEY, WADQF, WADEF, WVNEF, WIDEF, and WANAY. Residues 392–417 are amphipathic helix 4 (AH4); sequence AEDQWVNEFSKLNVDDWIDEFAEGPV. 4 TPR repeats span residues 491–524, 590–623, 625–657, and 658–691; these read AEGW…DPTN, ADVH…KPND, SLWN…KPNY, and VRAW…NPKA.

It belongs to the peroxisomal targeting signal receptor family. In terms of assembly, interacts (via WxxxF/Y and LVxEF motifs) with PEX14; promoting translocation through the PEX13-PEX14 docking complex. Interacts with PEX7, promoting peroxisomal import of proteins containing a C-terminal PTS2-type peroxisomal targeting signal. Interacts with LACS7. Monoubiquitinated at Cys-13 by PEX2 during PEX5 passage through the retrotranslocation channel. Cys-13 monoubiquitination acts as a recognition signal for the PEX1-PEX6 complex and is required for PEX5 extraction and export from peroxisomes. When PEX5 recycling is compromised, polyubiquitinated by PEX10 during its passage through the retrotranslocation channel, leading to its degradation. As to expression, expressed in flowers, siliques, leaves and roots.

The protein localises to the cytoplasm. The protein resides in the cytosol. It localises to the peroxisome matrix. In terms of biological role, receptor that mediates peroxisomal import of proteins containing a C-terminal PTS1-type tripeptide peroxisomal targeting signal (SKL-type). Binds to cargo proteins containing a PTS1 peroxisomal targeting signal in the cytosol, and translocates them into the peroxisome matrix by passing through the PEX13-PEX14 docking complex along with cargo proteins. PEX5 receptor is then retrotranslocated into the cytosol, leading to release of bound cargo in the peroxisome matrix, and reset for a subsequent peroxisome import cycle. In addition to promoting peroxisomal translocation of proteins containing a PTS1 peroxisomal targeting signal, mediates peroxisomal import of proteins containing a C-terminal PTS2-type peroxisomal targeting signal via its interaction with PEX7. Interaction with PEX7 only takes place when PEX7 is associated with cargo proteins containing a PTS2 peroxisomal targeting signal. PEX7 along with PTS2-containing cargo proteins are then translocated through the PEX13-PEX14 docking complex together with PEX5. Necessary for the developmental elimination of obsolete peroxisome matrix proteins. The chain is Peroxisome biogenesis protein 5 (PEX5) from Arabidopsis thaliana (Mouse-ear cress).